Here is a 292-residue protein sequence, read N- to C-terminus: uncharacterized protein (292 aa).

5 helical membrane passes run 57–77 (IISL…LTLI), 101–121 (VYVF…FNFM), 143–163 (LIYA…AVLI), 184–204 (VVIT…NFVL), and 271–291 (IAFL…DRGI).

This sequence belongs to the CbiQ family.

Its subcellular location is the cell membrane. This is an uncharacterized protein from Methanocaldococcus jannaschii (strain ATCC 43067 / DSM 2661 / JAL-1 / JCM 10045 / NBRC 100440) (Methanococcus jannaschii).